Reading from the N-terminus, the 511-residue chain is U3 snoRNP-associated protein-like YAOH (511 aa).

Basic residues predominate over residues 1–18 (MAPRPRKRVSRPKPRATS). A disordered region spans residues 1 to 117 (MAPRPRKRVS…EDEDEGEEAG (117 aa)). Composition is skewed to acidic residues over residues 44–53 (EDIESEDSDL) and 66–80 (DDGE…EQET). Over residues 81–105 (AGEKKMRIAKELLKKVTDAARRRRE) the composition is skewed to basic and acidic residues. WD repeat units follow at residues 158–197 (KHRQ…SEKY), 217–256 (KRSK…HIQA), 259–298 (GHRG…YMNC), 301–339 (GHQN…QLLF), 342–380 (PATA…PTHI), 412–451 (SAQS…KGIR), and 457–497 (RLDG…QNGV).

The protein belongs to the WD repeat RRP9 family.

Its subcellular location is the nucleus. It is found in the nucleolus. In terms of biological role, component of a nucleolar small nuclear ribonucleoprotein particle (snoRNP) thought to participate in the processing and modification of pre-ribosomal RNA. Essential for embryogenesis. This is U3 snoRNP-associated protein-like YAOH from Oryza sativa subsp. japonica (Rice).